The chain runs to 493 residues: Cobyric acid synthase (493 aa).

Residues 246 to 440 form the GATase cobBQ-type domain; it reads PIDIAVIKMP…IHGVFDGVSF (195 aa). Cys326 (nucleophile) is an active-site residue. His432 is an active-site residue.

The protein belongs to the CobB/CobQ family. CobQ subfamily.

The protein operates within cofactor biosynthesis; adenosylcobalamin biosynthesis. In terms of biological role, catalyzes amidations at positions B, D, E, and G on adenosylcobyrinic A,C-diamide. NH(2) groups are provided by glutamine, and one molecule of ATP is hydrogenolyzed for each amidation. This chain is Cobyric acid synthase, found in Clostridium botulinum (strain Langeland / NCTC 10281 / Type F).